Here is a 535-residue protein sequence, read N- to C-terminus: CTP synthase (535 aa).

The tract at residues 1-268 (MSTKYIFVTG…DQIVCDHLKL (268 aa)) is amidoligase domain. A CTP-binding site is contributed by Ser-14. Residue Ser-14 participates in UTP binding. 15–20 (SIGKGI) contacts ATP. Tyr-55 is an L-glutamine binding site. Residue Asp-72 coordinates ATP. Mg(2+) contacts are provided by Asp-72 and Glu-142. Residues 149–151 (DIE), 189–194 (KTKPTQ), and Lys-225 contribute to the CTP site. Residues 189 to 194 (KTKPTQ) and Lys-225 each bind UTP. The Glutamine amidotransferase type-1 domain occupies 293–535 (KISLVGKYVE…FVTAAVENSN (243 aa)). Gly-355 contributes to the L-glutamine binding site. The Nucleophile; for glutamine hydrolysis role is filled by Cys-382. L-glutamine-binding positions include 383–386 (LGMQ), Glu-406, and Arg-464. Active-site residues include His-509 and Glu-511.

The protein belongs to the CTP synthase family. In terms of assembly, homotetramer.

The catalysed reaction is UTP + L-glutamine + ATP + H2O = CTP + L-glutamate + ADP + phosphate + 2 H(+). It carries out the reaction L-glutamine + H2O = L-glutamate + NH4(+). The enzyme catalyses UTP + NH4(+) + ATP = CTP + ADP + phosphate + 2 H(+). It functions in the pathway pyrimidine metabolism; CTP biosynthesis via de novo pathway; CTP from UDP: step 2/2. With respect to regulation, allosterically activated by GTP, when glutamine is the substrate; GTP has no effect on the reaction when ammonia is the substrate. The allosteric effector GTP functions by stabilizing the protein conformation that binds the tetrahedral intermediate(s) formed during glutamine hydrolysis. Inhibited by the product CTP, via allosteric rather than competitive inhibition. Functionally, catalyzes the ATP-dependent amination of UTP to CTP with either L-glutamine or ammonia as the source of nitrogen. Regulates intracellular CTP levels through interactions with the four ribonucleotide triphosphates. This is CTP synthase from Streptococcus pneumoniae (strain ATCC BAA-255 / R6).